Consider the following 104-residue polypeptide: Large ribosomal subunit protein bL21 (104 aa).

It belongs to the bacterial ribosomal protein bL21 family. As to quaternary structure, part of the 50S ribosomal subunit. Contacts protein L20.

Its function is as follows. This protein binds to 23S rRNA in the presence of protein L20. In Symbiobacterium thermophilum (strain DSM 24528 / JCM 14929 / IAM 14863 / T), this protein is Large ribosomal subunit protein bL21.